The chain runs to 643 residues: Macrolide export ATP-binding/permease protein MacB (643 aa).

The ABC transporter domain maps to 4–242 (IEIKELNRYF…VNNQSKAKSR (239 aa)). 40 to 47 (GQSGSGKS) contacts ATP. 4 helical membrane-spanning segments follow: residues 269-289 (LLTMLGIIIGITSVVSVVALG), 523-543 (IAFISLIVGGIGVMNIMLVSV), 572-592 (ILICMIGGISGIMLSLIIGGI), and 603-623 (VFSTFSIVAAVLCSTLIGVIF).

It belongs to the ABC transporter superfamily. Macrolide exporter (TC 3.A.1.122) family. In terms of assembly, homodimer. Part of the tripartite efflux system MacAB-TolC, which is composed of an inner membrane transporter, MacB, a periplasmic membrane fusion protein, MacA, and an outer membrane component, TolC. The complex forms a large protein conduit and can translocate molecules across both the inner and outer membranes. Interacts with MacA.

It is found in the cell inner membrane. Part of the tripartite efflux system MacAB-TolC. MacB is a non-canonical ABC transporter that contains transmembrane domains (TMD), which form a pore in the inner membrane, and an ATP-binding domain (NBD), which is responsible for energy generation. Confers resistance against macrolides. In Mannheimia succiniciproducens (strain KCTC 0769BP / MBEL55E), this protein is Macrolide export ATP-binding/permease protein MacB.